The following is a 289-amino-acid chain: ATP synthase gamma chain (289 aa).

This sequence belongs to the ATPase gamma chain family. As to quaternary structure, F-type ATPases have 2 components, CF(1) - the catalytic core - and CF(0) - the membrane proton channel. CF(1) has five subunits: alpha(3), beta(3), gamma(1), delta(1), epsilon(1). CF(0) has three main subunits: a, b and c.

Its subcellular location is the cell membrane. Functionally, produces ATP from ADP in the presence of a proton gradient across the membrane. The gamma chain is believed to be important in regulating ATPase activity and the flow of protons through the CF(0) complex. This Mycoplasmoides gallisepticum (strain R(low / passage 15 / clone 2)) (Mycoplasma gallisepticum) protein is ATP synthase gamma chain.